A 400-amino-acid chain; its full sequence is Glutamyl-tRNA reductase (400 aa).

Substrate is bound by residues 45-48 (TCNR), Ser103, 108-110 (EDQ), and Gln114. Cys46 serves as the catalytic Nucleophile. 179-184 (GYGEIG) is an NADP(+) binding site.

Belongs to the glutamyl-tRNA reductase family. In terms of assembly, homodimer.

It carries out the reaction (S)-4-amino-5-oxopentanoate + tRNA(Glu) + NADP(+) = L-glutamyl-tRNA(Glu) + NADPH + H(+). It participates in porphyrin-containing compound metabolism; protoporphyrin-IX biosynthesis; 5-aminolevulinate from L-glutamyl-tRNA(Glu): step 1/2. In terms of biological role, catalyzes the NADPH-dependent reduction of glutamyl-tRNA(Glu) to glutamate 1-semialdehyde (GSA). In Clostridium perfringens (strain ATCC 13124 / DSM 756 / JCM 1290 / NCIMB 6125 / NCTC 8237 / Type A), this protein is Glutamyl-tRNA reductase.